Here is a 704-residue protein sequence, read N- to C-terminus: Elongation factor G (704 aa).

A tr-type G domain is found at 8-290; it reads ARYRNIGISA…AVIDYLPSPV (283 aa). GTP-binding positions include 17 to 24, 88 to 92, and 142 to 145; these read AHIDAGKT, DTPGH, and NKMD. An N6-acetyllysine mark is found at Lys504 and Lys643.

This sequence belongs to the TRAFAC class translation factor GTPase superfamily. Classic translation factor GTPase family. EF-G/EF-2 subfamily.

The protein resides in the cytoplasm. Catalyzes the GTP-dependent ribosomal translocation step during translation elongation. During this step, the ribosome changes from the pre-translocational (PRE) to the post-translocational (POST) state as the newly formed A-site-bound peptidyl-tRNA and P-site-bound deacylated tRNA move to the P and E sites, respectively. Catalyzes the coordinated movement of the two tRNA molecules, the mRNA and conformational changes in the ribosome. The chain is Elongation factor G from Shigella sonnei (strain Ss046).